We begin with the raw amino-acid sequence, 238 residues long: 2,3-bisphosphoglycerate-dependent phosphoglycerate mutase (238 aa).

Substrate is bound by residues 8 to 15, 21 to 22, Arg60, 86 to 89, Lys97, 113 to 114, and 182 to 183; these read RHGQSEWN, TG, ERHY, RR, and GN. The active-site Tele-phosphohistidine intermediate is the His9. Residue Glu86 is the Proton donor/acceptor of the active site.

Belongs to the phosphoglycerate mutase family. BPG-dependent PGAM subfamily. As to quaternary structure, homodimer.

It catalyses the reaction (2R)-2-phosphoglycerate = (2R)-3-phosphoglycerate. It participates in carbohydrate degradation; glycolysis; pyruvate from D-glyceraldehyde 3-phosphate: step 3/5. In terms of biological role, catalyzes the interconversion of 2-phosphoglycerate and 3-phosphoglycerate. The chain is 2,3-bisphosphoglycerate-dependent phosphoglycerate mutase from Pelagibacter ubique (strain HTCC1062).